A 1406-amino-acid polypeptide reads, in one-letter code: DNA-directed RNA polymerase subunit beta' (1406 aa).

Zn(2+)-binding residues include Cys70, Cys72, Cys85, and Cys88. Positions 460, 462, and 464 each coordinate Mg(2+). The Zn(2+) site is built by Cys814, Cys888, Cys895, and Cys898.

It belongs to the RNA polymerase beta' chain family. As to quaternary structure, the RNAP catalytic core consists of 2 alpha, 1 beta, 1 beta' and 1 omega subunit. When a sigma factor is associated with the core the holoenzyme is formed, which can initiate transcription. Mg(2+) serves as cofactor. Requires Zn(2+) as cofactor.

It carries out the reaction RNA(n) + a ribonucleoside 5'-triphosphate = RNA(n+1) + diphosphate. DNA-dependent RNA polymerase catalyzes the transcription of DNA into RNA using the four ribonucleoside triphosphates as substrates. The protein is DNA-directed RNA polymerase subunit beta' of Yersinia pseudotuberculosis serotype O:1b (strain IP 31758).